The following is a 134-amino-acid chain: Large ribosomal subunit protein uL22 (134 aa).

Belongs to the universal ribosomal protein uL22 family. As to quaternary structure, part of the 50S ribosomal subunit.

Its function is as follows. This protein binds specifically to 23S rRNA; its binding is stimulated by other ribosomal proteins, e.g. L4, L17, and L20. It is important during the early stages of 50S assembly. It makes multiple contacts with different domains of the 23S rRNA in the assembled 50S subunit and ribosome. In terms of biological role, the globular domain of the protein is located near the polypeptide exit tunnel on the outside of the subunit, while an extended beta-hairpin is found that lines the wall of the exit tunnel in the center of the 70S ribosome. This is Large ribosomal subunit protein uL22 from Rhodococcus jostii (strain RHA1).